A 338-amino-acid polypeptide reads, in one-letter code: Large ribosomal subunit protein uL10 (338 aa).

A compositionally biased stretch (basic and acidic residues) spans 309–327 (KAEVEEAKEEEKEEKKEEA). Residues 309–338 (KAEVEEAKEEEKEEKKEEAAPAAAGLGLLF) form a disordered region.

This sequence belongs to the universal ribosomal protein uL10 family. Part of the 50S ribosomal subunit. Forms part of the ribosomal stalk which helps the ribosome interact with GTP-bound translation factors. Forms a heptameric L10(L12)2(L12)2(L12)2 complex, where L10 forms an elongated spine to which the L12 dimers bind in a sequential fashion.

Forms part of the ribosomal stalk, playing a central role in the interaction of the ribosome with GTP-bound translation factors. This Methanothermococcus thermolithotrophicus (Methanococcus thermolithotrophicus) protein is Large ribosomal subunit protein uL10.